The primary structure comprises 239 residues: Geranylgeranylglyceryl phosphate synthase (239 aa).

K13 provides a ligand contact to sn-glycerol 1-phosphate. D15 and T42 together coordinate Mg(2+). Residues 162 to 167, G192, and 212 to 213 each bind sn-glycerol 1-phosphate; these read YIEYSG and GD.

It belongs to the GGGP/HepGP synthase family. Group I subfamily. It depends on Mg(2+) as a cofactor.

The protein localises to the cytoplasm. It catalyses the reaction sn-glycerol 1-phosphate + (2E,6E,10E)-geranylgeranyl diphosphate = sn-3-O-(geranylgeranyl)glycerol 1-phosphate + diphosphate. The protein operates within membrane lipid metabolism; glycerophospholipid metabolism. Functionally, prenyltransferase that catalyzes the transfer of the geranylgeranyl moiety of geranylgeranyl diphosphate (GGPP) to the C3 hydroxyl of sn-glycerol-1-phosphate (G1P). This reaction is the first ether-bond-formation step in the biosynthesis of archaeal membrane lipids. The sequence is that of Geranylgeranylglyceryl phosphate synthase from Haloquadratum walsbyi (strain DSM 16790 / HBSQ001).